The following is a 250-amino-acid chain: UPF0736 protein YjbA (250 aa).

Belongs to the UPF0736 family.

The polypeptide is UPF0736 protein YjbA (yjbA) (Bacillus subtilis (strain 168)).